Consider the following 389-residue polypeptide: Protein Wnt-10b (389 aa).

The first 28 residues, 1-28 (MLEEPRPRPPPSGLAGLLFLALCSRALS), serve as a signal peptide directing secretion. Thr-46 is subject to Phosphothreonine. Disulfide bonds link Cys-83–Cys-94, Cys-136–Cys-144, Cys-146–Cys-199, Cys-247–Cys-261, Cys-249–Cys-256, Cys-318–Cys-349, Cys-334–Cys-344, Cys-348–Cys-388, Cys-364–Cys-379, Cys-366–Cys-376, and Cys-371–Cys-372. N-linked (GlcNAc...) asparagine glycosylation is present at Asn-93. The interval 171–197 (KSFPHSLPSPGPGSSPSPGPQDTWEWG) is disordered. The segment covering 177–189 (LPSPGPGSSPSPG) has biased composition (pro residues). Ser-253 carries O-palmitoleoyl serine; by PORCN lipidation. Asn-335 carries an N-linked (GlcNAc...) asparagine glycan.

This sequence belongs to the Wnt family. In terms of assembly, forms a soluble 1:1 complex with AFM; this prevents oligomerization and is required for prolonged biological activity. The complex with AFM may represent the physiological form in body fluids. Palmitoleoylation is required for efficient binding to frizzled receptors. Depalmitoleoylation leads to Wnt signaling pathway inhibition. As to expression, detected in most adult tissues. Highest levels were found in heart and skeletal muscle. Low levels are found in brain.

The protein resides in the secreted. It localises to the extracellular space. It is found in the extracellular matrix. Its function is as follows. Member of the Wnt ligand gene family that encodes for secreted proteins, which activate the Wnt signaling cascade. Specifically activates canonical Wnt/beta-catenin signaling and thus triggers beta-catenin/LEF/TCF-mediated transcriptional programs. Involved in signaling networks controlling stemness, pluripotency and cell fate decisions. Acts in the immune system, mammary gland, adipose tissue, bone and skin. In Homo sapiens (Human), this protein is Protein Wnt-10b (WNT10B).